The sequence spans 224 residues: Charged multivesicular body protein 4b (224 aa).

Positions 1–23 (MSVFGKLFGAGGGKAGKGGPTPQ) are disordered. At Ser2 the chain carries N-acetylserine. Lys6 carries the N6-acetyllysine modification. Over residues 8 to 19 (FGAGGGKAGKGG) the composition is skewed to gly residues. Positions 23–183 (QEAIQRLRDT…EELDKNLLEI (161 aa)) form a coiled coil. Position 114 is an N6-acetyllysine (Lys114). Ser184 and Ser223 each carry phosphoserine. The interval 185 to 224 (GPETVPLPNVPSIALPSKPAKKKEEEDDDMKELENWAGSM) is disordered.

It belongs to the SNF7 family. Probable core component of the endosomal sorting required for transport complex III (ESCRT-III). ESCRT-III components are thought to multimerize to form a flat lattice on the perimeter membrane of the endosome. Several assembly forms of ESCRT-III may exist that interact and act sequentially. Interacts with CHMP6 and CHMP4C. Interacts with PDCD6IP; the interaction is direct. Interacts with VPS4A; the interaction is direct. Interacts with VPS4B; the interaction is direct. Interacts with CHMP7. Interacts with CFTR; the interaction requires misfolded CFTR. Interacts with PTPN23. Interacts with CC2D1B. In terms of processing, ISGylated. Isgylation weakens its interaction with VPS4A. Widely expressed. Expressed at higher level in heart and skeletal muscle. Also expressed in brain, colon, thymus, spleen, kidney, liver, small intestine, placenta, lung and peripheral blood lymphocytes.

It localises to the cytoplasm. Its subcellular location is the cytosol. It is found in the late endosome membrane. The protein resides in the midbody. The protein localises to the nucleus envelope. Its function is as follows. Probable core component of the endosomal sorting required for transport complex III (ESCRT-III) which is involved in multivesicular bodies (MVBs) formation and sorting of endosomal cargo proteins into MVBs. MVBs contain intraluminal vesicles (ILVs) that are generated by invagination and scission from the limiting membrane of the endosome and mostly are delivered to lysosomes enabling degradation of membrane proteins, such as stimulated growth factor receptors, lysosomal enzymes and lipids. The MVB pathway appears to require the sequential function of ESCRT-O, -I,-II and -III complexes. ESCRT-III proteins mostly dissociate from the invaginating membrane before the ILV is released. The ESCRT machinery also functions in topologically equivalent membrane fission events, such as the terminal stages of cytokinesis. Together with SPAST, the ESCRT-III complex promotes nuclear envelope sealing and mitotic spindle disassembly during late anaphase. Plays a role in the endosomal sorting pathway. ESCRT-III proteins are believed to mediate the necessary vesicle extrusion and/or membrane fission activities, possibly in conjunction with the AAA ATPase VPS4. When overexpressed, membrane-assembled circular arrays of CHMP4B filaments can promote or stabilize negative curvature and outward budding. CHMP4A/B/C are required for the exosomal release of SDCBP, CD63 and syndecan. Majority of the protein exists in a folded closed conformation. In terms of biological role, (Microbial infection) The ESCRT machinery also functions in topologically equivalent membrane fission events, such as the budding of enveloped viruses (HIV-1 and other lentiviruses). Via its interaction with PDCD6IP involved in HIV-1 p6- and p9-dependent virus release. The polypeptide is Charged multivesicular body protein 4b (CHMP4B) (Homo sapiens (Human)).